Here is a 306-residue protein sequence, read N- to C-terminus: MVLSSELLASILAEVRPLLGQGKVADYIPALAQVPADRLGMAVCTVEGELFTAGDAFEPFSIQSISKALSLTLALTLYQEEEIWARVGKEPSGQPFNSLVQLEFEQGIPRNPFINAGALVVSDLLETRLTAPRQRTLELVRRLSGNPAIMADQVVARSEYQHSARNAAIAYLMKAYGNFENEVDKVLQSYFNACAIRMSCVDLARAFIYLANRGVPLGAGEPLLPARTTKQVNALLATCGLYDEAGDFAYRVGMPGKSGVGGGIMALIPGELCVCVWSPELNKAGNSLAGTAALELLAERLGRSIF.

Residues S64, N115, E159, N166, Y190, Y242, and V260 each contribute to the substrate site.

This sequence belongs to the glutaminase family. As to quaternary structure, homotetramer.

The enzyme catalyses L-glutamine + H2O = L-glutamate + NH4(+). The polypeptide is Glutaminase (Aeromonas salmonicida (strain A449)).